Here is a 290-residue protein sequence, read N- to C-terminus: uncharacterized protein (290 aa).

7 helical membrane-spanning segments follow: residues 40 to 60 (MHVILLSALFYQIINILSPVI), 80 to 100 (DAHVVSSVQSIVLICLGYTCL), 110 to 130 (LFGYSVVAGDIYALTAGYFVW), 139 to 159 (VHITGIGFVIHAIAALFVITF), 166 to 188 (MYYGPTYLSWELSTPFLNIHYFL), 200 to 220 (MINGFILIVTFICVRIAWGWF), and 238 to 260 (WALSLFYLAANMSLNCLNLFWVS). A TLC domain is found at 74–271 (KTRLNWDAHV…MIDAIRRRAH (198 aa)).

The protein localises to the endoplasmic reticulum membrane. This is an uncharacterized protein from Schizosaccharomyces pombe (strain 972 / ATCC 24843) (Fission yeast).